A 143-amino-acid polypeptide reads, in one-letter code: Transcriptional regulator MraZ (143 aa).

SpoVT-AbrB domains are found at residues 5–47 (EYEH…TLEE) and 76–119 (AVEV…DRAS).

It belongs to the MraZ family. As to quaternary structure, forms oligomers.

It is found in the cytoplasm. The protein localises to the nucleoid. The protein is Transcriptional regulator MraZ of Staphylococcus carnosus (strain TM300).